The sequence spans 532 residues: Berberine bridge enzyme-like 23 (532 aa).

Positions 1 to 22 are cleaved as a signal peptide; sequence MRTLEAFALSLFLVFLVKWVNS. A disulfide bond links cysteine 36 and cysteine 102. N-linked (GlcNAc...) asparagine glycosylation is present at asparagine 78. The 177-residue stretch at 80–256 folds into the FAD-binding PCMH-type domain; the sequence is TSQKPILIVT…LSWKVKLVRV (177 aa). The 6-(S-cysteinyl)-8alpha-(pros-histidyl)-FAD (His-Cys) cross-link spans 117 to 180; sequence HDYEGLSYLS…KIHGFPAGTC (64 aa). Residues asparagine 272 and asparagine 487 are each glycosylated (N-linked (GlcNAc...) asparagine).

This sequence belongs to the oxygen-dependent FAD-linked oxidoreductase family. Requires FAD as cofactor. In terms of processing, the FAD cofactor is bound via a bicovalent 6-S-cysteinyl, 8alpha-N1-histidyl FAD linkage. As to expression, accumulates in cell walls of etiolated hypocotyls.

It localises to the secreted. The protein resides in the cell wall. This Arabidopsis thaliana (Mouse-ear cress) protein is Berberine bridge enzyme-like 23.